Here is a 93-residue protein sequence, read N- to C-terminus: Neurophysin 1 (93 aa).

7 disulfides stabilise this stretch: Cys10/Cys54, Cys13/Cys27, Cys21/Cys44, Cys28/Cys34, Cys61/Cys74, Cys68/Cys86, and Cys75/Cys80.

Belongs to the vasopressin/oxytocin family.

Its subcellular location is the secreted. Functionally, neurophysin 1 specifically binds oxytocin. The protein is Neurophysin 1 of Anser anser anser (Western greylag goose).